The following is a 324-amino-acid chain: UDP-N-acetylenolpyruvoylglucosamine reductase (324 aa).

One can recognise an FAD-binding PCMH-type domain in the interval 36–203 (FRAGGLAELM…TSVLFEGYPE (168 aa)). Arg-183 is an active-site residue. Catalysis depends on Ser-232, which acts as the Proton donor. Glu-302 is a catalytic residue.

Belongs to the MurB family. The cofactor is FAD.

It is found in the cytoplasm. It carries out the reaction UDP-N-acetyl-alpha-D-muramate + NADP(+) = UDP-N-acetyl-3-O-(1-carboxyvinyl)-alpha-D-glucosamine + NADPH + H(+). It functions in the pathway cell wall biogenesis; peptidoglycan biosynthesis. In terms of biological role, cell wall formation. In Rhizobium etli (strain CIAT 652), this protein is UDP-N-acetylenolpyruvoylglucosamine reductase.